A 503-amino-acid polypeptide reads, in one-letter code: Putative acyl--CoA ligase YdaB (503 aa).

This sequence belongs to the ATP-dependent AMP-binding enzyme family.

The polypeptide is Putative acyl--CoA ligase YdaB (ydaB) (Bacillus subtilis (strain 168)).